A 1636-amino-acid polypeptide reads, in one-letter code: Tyrosine-protein phosphatase non-receptor type 23 (1636 aa).

Positions 8–394 (PMIWLDLKEA…AKIEDKNEVL (387 aa)) constitute a BRO1 domain. TPR repeat units follow at residues 250 to 283 (AVAH…LNEA) and 374 to 407 (EEKA…DPET). Positions 550-623 (KAVLQNLKRI…VYLEQNLAAQ (74 aa)) form a coiled coil. Residues 701–714 (EAARQQLLDRELKK) are compositionally biased toward basic and acidic residues. Disordered regions lie at residues 701 to 812 (EAAR…GPHA) and 888 to 1151 (QAPI…AAEG). At Ser-733 the chain carries Phosphoserine. The interval 770-1130 (HFPPSPFPSS…SSSPESQHGG (361 aa)) is his. Composition is skewed to pro residues over residues 898 to 922 (RPNP…PTPY) and 950 to 962 (RIGP…PQPH). Arg-950 is subject to Omega-N-methylarginine. 6 tandem repeats follow at residues 953–954 (PQ), 955–956 (PQ), 957–958 (PH), 959–960 (PQ), 961–962 (PH), and 963–964 (PS). The 6 X 2 AA approximate tandem repeats of P-Q stretch occupies residues 953–964 (PQPQPHPQPHPS). 3 stretches are compositionally biased toward pro residues: residues 983–1002 (LFPP…PYAP), 1036–1050 (FPSP…PPLA), and 1083–1109 (HLVP…PPPC). The span at 1120–1131 (LSSSPESQHGGT) shows a compositional bias: polar residues. Phosphoserine occurs at positions 1122 and 1123. Thr-1131 carries the post-translational modification Phosphothreonine. The Tyrosine-protein phosphatase domain occupies 1192–1452 (DTVWRELQDA…RFCYEAVVRH (261 aa)). Cys-1392 serves as the catalytic Phosphocysteine intermediate. Residues 1513 to 1636 (LESPVASLPG…LDPLWTLNKT (124 aa)) form a disordered region. Composition is skewed to pro residues over residues 1523-1533 (PAEPPGLPPAS) and 1542-1556 (SSSP…PEAP). Low complexity predominate over residues 1567-1587 (APSSGPPSSSLELLASLTPEA). Arg-1615 is subject to Omega-N-methylarginine.

Belongs to the protein-tyrosine phosphatase family. Non-receptor class subfamily. As to quaternary structure, interacts with GRAP2 and GRB2. Interacts with UBAP1. Interacts with CHMP4B.

Its subcellular location is the nucleus. The protein resides in the cytoplasm. The protein localises to the cytoplasmic vesicle. It localises to the endosome. It is found in the cytoskeleton. Its subcellular location is the cilium basal body. The protein resides in the early endosome. The enzyme catalyses O-phospho-L-tyrosyl-[protein] + H2O = L-tyrosyl-[protein] + phosphate. Functionally, plays a role in sorting of endocytic ubiquitinated cargos into multivesicular bodies (MVBs) via its interaction with the ESCRT-I complex (endosomal sorting complex required for transport I), and possibly also other ESCRT complexes. May act as a negative regulator of Ras-mediated mitogenic activity. Plays a role in ciliogenesis. The protein is Tyrosine-protein phosphatase non-receptor type 23 (PTPN23) of Homo sapiens (Human).